The following is a 595-amino-acid chain: Arginine--tRNA ligase (595 aa).

The 'HIGH' region signature appears at 132–142 (ANPTGPLHVGH).

Belongs to the class-I aminoacyl-tRNA synthetase family. In terms of assembly, monomer.

It localises to the cytoplasm. The catalysed reaction is tRNA(Arg) + L-arginine + ATP = L-arginyl-tRNA(Arg) + AMP + diphosphate. This Cupriavidus pinatubonensis (strain JMP 134 / LMG 1197) (Cupriavidus necator (strain JMP 134)) protein is Arginine--tRNA ligase.